The chain runs to 506 residues: Chromosomal replication initiator protein DnaA (506 aa).

The domain I, interacts with DnaA modulators stretch occupies residues 1-77 (MECATTATTP…IWAEESGAKR (77 aa)). The domain II stretch occupies residues 77–162 (RRVDLAVRNA…AVAGDVASGS (86 aa)). 2 stretches are compositionally biased toward basic and acidic residues: residues 103–112 (TERTDMHSGD) and 121–142 (SDGRSTDARGADGRGSDARAVE). The interval 103–142 (TERTDMHSGDTRQQSARISDGRSTDARGADGRGSDARAVE) is disordered. A domain III, AAA+ region region spans residues 163–384 (PLDARLTFET…GALNKLLAFN (222 aa)). 4 residues coordinate ATP: Gly210, Gly212, Lys213, and Thr214. Positions 385–506 (QLTGEPVTLE…EVLKRLALEA (122 aa)) are domain IV, binds dsDNA.

It belongs to the DnaA family. Oligomerizes as a right-handed, spiral filament on DNA at oriC.

It is found in the cytoplasm. In terms of biological role, plays an essential role in the initiation and regulation of chromosomal replication. ATP-DnaA binds to the origin of replication (oriC) to initiate formation of the DNA replication initiation complex once per cell cycle. Binds the DnaA box (a 9 base pair repeat at the origin) and separates the double-stranded (ds)DNA. Forms a right-handed helical filament on oriC DNA; dsDNA binds to the exterior of the filament while single-stranded (ss)DNA is stabiized in the filament's interior. The ATP-DnaA-oriC complex binds and stabilizes one strand of the AT-rich DNA unwinding element (DUE), permitting loading of DNA polymerase. After initiation quickly degrades to an ADP-DnaA complex that is not apt for DNA replication. Binds acidic phospholipids. The polypeptide is Chromosomal replication initiator protein DnaA (Xanthobacter autotrophicus (strain ATCC BAA-1158 / Py2)).